The following is a 352-amino-acid chain: Molybdenum import ATP-binding protein ModC (352 aa).

One can recognise an ABC transporter domain in the interval 1–229 (MLELNFSQTL…SVMHPWLPKE (229 aa)). 31 to 38 (GVSGAGKT) provides a ligand contact to ATP. A Mop domain is found at 289–352 (QTSIRNVLRA…AQVKSVSITA (64 aa)).

Belongs to the ABC transporter superfamily. Molybdate importer (TC 3.A.1.8) family. The complex is composed of two ATP-binding proteins (ModC), two transmembrane proteins (ModB) and a solute-binding protein (ModA).

The protein resides in the cell inner membrane. It carries out the reaction molybdate(out) + ATP + H2O = molybdate(in) + ADP + phosphate + H(+). Part of the ABC transporter complex ModABC involved in molybdenum import. Responsible for energy coupling to the transport system. The chain is Molybdenum import ATP-binding protein ModC from Salmonella paratyphi A (strain ATCC 9150 / SARB42).